A 212-amino-acid chain; its full sequence is ECF RNA polymerase sigma factor SigD (212 aa).

The sigma-70 factor domain-2 stretch occupies residues 49-119 (ETIRPIVVRY…VADAHRAAGR (71 aa)). A Polymerase core binding motif is present at residues 75-78 (DVAQ). The interval 152–201 (NELLEILPAKQREILILRVVVGLSAEETAAAVGSTTGAVRVAQHRALQRL) is sigma-70 factor domain-4. Positions 176–195 (AEETAAAVGSTTGAVRVAQH) form a DNA-binding region, H-T-H motif.

It belongs to the sigma-70 factor family. ECF subfamily. In terms of assembly, interacts transiently with the RNA polymerase catalytic core formed by RpoA, RpoB, RpoC and RpoZ (2 alpha, 1 beta, 1 beta' and 1 omega subunit) to form the RNA polymerase holoenzyme that can initiate transcription. Interacts (via sigma-70 factor domain 4) with RsdA.

Its function is as follows. Sigma factors are initiation factors that promote the attachment of RNA polymerase to specific initiation sites and are then released. Extracytoplasmic function (ECF) sigma factors are held in an inactive form by an anti-sigma factor until released by regulated intramembrane proteolysis. The protein is ECF RNA polymerase sigma factor SigD (sigD) of Mycobacterium bovis (strain ATCC BAA-935 / AF2122/97).